The primary structure comprises 485 residues: Taxane 13-alpha-hydroxylase (485 aa).

Position 431 (Cys-431) interacts with heme.

This sequence belongs to the cytochrome P450 family. Heme is required as a cofactor.

The catalysed reaction is taxa-4(20),11-dien-5alpha-ol + reduced [NADPH--hemoprotein reductase] + O2 = taxa-4(20),11-dien-5alpha,13alpha-diol + oxidized [NADPH--hemoprotein reductase] + H2O + H(+). It participates in alkaloid biosynthesis; taxol biosynthesis. Involved in the transformation of a taxadienyl acetate by hydroxylation at C13 to yield taxadien-5-alpha-acetoxy-13-alpha-ol. The sequence is that of Taxane 13-alpha-hydroxylase (CYP725A2) from Taxus cuspidata (Japanese yew).